The primary structure comprises 394 residues: 1-deoxy-D-xylulose 5-phosphate reductoisomerase (394 aa).

The NADPH site is built by threonine 12, glycine 13, serine 14, isoleucine 15, lysine 39, glutamine 40, and asparagine 126. Position 127 (lysine 127) interacts with 1-deoxy-D-xylulose 5-phosphate. NADPH is bound at residue glutamate 128. Aspartate 152 serves as a coordination point for Mn(2+). Residues serine 153, glutamate 154, serine 183, and histidine 206 each coordinate 1-deoxy-D-xylulose 5-phosphate. Glutamate 154 contacts Mn(2+). Glycine 212 provides a ligand contact to NADPH. Residues serine 219, asparagine 224, lysine 225, and glutamate 228 each coordinate 1-deoxy-D-xylulose 5-phosphate. Glutamate 228 serves as a coordination point for Mn(2+).

Belongs to the DXR family. Mg(2+) serves as cofactor. It depends on Mn(2+) as a cofactor.

The enzyme catalyses 2-C-methyl-D-erythritol 4-phosphate + NADP(+) = 1-deoxy-D-xylulose 5-phosphate + NADPH + H(+). The protein operates within isoprenoid biosynthesis; isopentenyl diphosphate biosynthesis via DXP pathway; isopentenyl diphosphate from 1-deoxy-D-xylulose 5-phosphate: step 1/6. Functionally, catalyzes the NADPH-dependent rearrangement and reduction of 1-deoxy-D-xylulose-5-phosphate (DXP) to 2-C-methyl-D-erythritol 4-phosphate (MEP). The polypeptide is 1-deoxy-D-xylulose 5-phosphate reductoisomerase (Neisseria meningitidis serogroup A / serotype 4A (strain DSM 15465 / Z2491)).